A 142-amino-acid polypeptide reads, in one-letter code: Large ribosomal subunit protein uL13 (142 aa).

The protein belongs to the universal ribosomal protein uL13 family. Part of the 50S ribosomal subunit.

Functionally, this protein is one of the early assembly proteins of the 50S ribosomal subunit, although it is not seen to bind rRNA by itself. It is important during the early stages of 50S assembly. The protein is Large ribosomal subunit protein uL13 of Yersinia enterocolitica serotype O:8 / biotype 1B (strain NCTC 13174 / 8081).